The chain runs to 328 residues: Stress response kinase A (328 aa).

Asp201 serves as the catalytic Proton acceptor. The Mg(2+) site is built by Asn206 and Asp217. The active site involves Asp217.

This sequence belongs to the SrkA/RdoA protein kinase family. In terms of assembly, monomer. The cofactor is Mg(2+).

Its subcellular location is the cytoplasm. The enzyme catalyses L-seryl-[protein] + ATP = O-phospho-L-seryl-[protein] + ADP + H(+). It catalyses the reaction L-threonyl-[protein] + ATP = O-phospho-L-threonyl-[protein] + ADP + H(+). A protein kinase that phosphorylates Ser and Thr residues. Probably acts to suppress the effects of stress linked to accumulation of reactive oxygen species. Probably involved in the extracytoplasmic stress response. Also has a role in LPS synthesis, through regulation of the galETK expression. In terms of biological role, a protein kinase that phosphorylates Ser and Thr residues. Probably acts to suppress the effects of stress linked to accumulation of reactive oxygen species. Probably involved in the extracytoplasmic stress response. The polypeptide is Stress response kinase A (Shigella flexneri).